Consider the following 386-residue polypeptide: Succinate--CoA ligase [ADP-forming] subunit beta (386 aa).

The ATP-grasp domain maps to 9-244 (KEILKQYGVK…LDEEDEKEIE (236 aa)). ATP-binding positions include Lys46, 53–55 (GRG), Glu99, Cys102, and Glu107. Mg(2+)-binding residues include Asn199 and Asp213. Substrate contacts are provided by residues Asn264 and 321–323 (GIM).

The protein belongs to the succinate/malate CoA ligase beta subunit family. Heterotetramer of two alpha and two beta subunits. It depends on Mg(2+) as a cofactor.

It carries out the reaction succinate + ATP + CoA = succinyl-CoA + ADP + phosphate. The enzyme catalyses GTP + succinate + CoA = succinyl-CoA + GDP + phosphate. It functions in the pathway carbohydrate metabolism; tricarboxylic acid cycle; succinate from succinyl-CoA (ligase route): step 1/1. In terms of biological role, succinyl-CoA synthetase functions in the citric acid cycle (TCA), coupling the hydrolysis of succinyl-CoA to the synthesis of either ATP or GTP and thus represents the only step of substrate-level phosphorylation in the TCA. The beta subunit provides nucleotide specificity of the enzyme and binds the substrate succinate, while the binding sites for coenzyme A and phosphate are found in the alpha subunit. The chain is Succinate--CoA ligase [ADP-forming] subunit beta from Brevibacillus brevis (strain 47 / JCM 6285 / NBRC 100599).